Reading from the N-terminus, the 219-residue chain is Adenylate kinase (219 aa).

An ATP-binding site is contributed by 13–18 (GAGKGT). The segment at 33-62 (STGDIFRAAIKNETKMGLEAKKYIDAGNLV) is NMP. AMP is bound by residues Thr-34, Arg-39, 60 to 62 (NLV), 88 to 91 (GYPR), and Gln-95. The interval 129-167 (GRFICRTCGATYHKLYNKPKVEGTCDVCGGHDFYQRDDD) is LID. Arg-130 contacts ATP. Cys-133 and Cys-136 together coordinate Zn(2+). 139 to 140 (TY) is a binding site for ATP. Cys-153 and Cys-156 together coordinate Zn(2+). Arg-164 and Arg-175 together coordinate AMP. An ATP-binding site is contributed by Arg-203.

The protein belongs to the adenylate kinase family. In terms of assembly, monomer.

It localises to the cytoplasm. The catalysed reaction is AMP + ATP = 2 ADP. It functions in the pathway purine metabolism; AMP biosynthesis via salvage pathway; AMP from ADP: step 1/1. Catalyzes the reversible transfer of the terminal phosphate group between ATP and AMP. Plays an important role in cellular energy homeostasis and in adenine nucleotide metabolism. This Lactiplantibacillus plantarum (strain ATCC BAA-793 / NCIMB 8826 / WCFS1) (Lactobacillus plantarum) protein is Adenylate kinase.